The primary structure comprises 105 residues: MADWNGEYISPYAEHGKKSEQVKKITVSIPIKVLEILTNERTRRQIRNLRHATNSELLCEAFLHAFTGQPLPTDDDLMKERSNEIPEEAKLKMRELGIDPDKWQY.

This sequence belongs to the MetJ family. Homodimer.

It is found in the cytoplasm. Functionally, this regulatory protein, when combined with SAM (S-adenosylmethionine) represses the expression of the methionine regulon and of enzymes involved in SAM synthesis. This Glaesserella parasuis serovar 5 (strain SH0165) (Haemophilus parasuis) protein is Met repressor.